A 661-amino-acid chain; its full sequence is Period circadian protein (661 aa).

Residues 1–34 (KVSDSAYSNSCSNSQSQRSGSSKSRLSGSHSSGS) are compositionally biased toward low complexity. A disordered region spans residues 1–151 (KVSDSAYSNS…RVEGVAKSEA (151 aa)). Positions 53-66 (KRNKDKSRKKKKNK) match the Nuclear localization signal motif. Basic residues predominate over residues 53–66 (KRNKDKSRKKKKNK). Residues 108-120 (ELQDQQHGEDHSE) show a composition bias toward basic and acidic residues. 2 consecutive PAS domains span residues 223 to 358 (DSFC…ATPI) and 376 to 482 (FAIR…RVFQ). The interval 582-661 (TNTSIAGTGG…VTLTESLLNK (80 aa)) is disordered. The segment covering 588 to 634 (GTGGTGTGTGTGTGTGTGTGTGTGTGTGTGTGTGTGTGTGTGTGNGT) has biased composition (gly residues). A run of 22 repeats spans residues 591-592 (GT), 593-594 (GT), 595-596 (GT), 597-598 (GT), 599-600 (GT), 601-602 (GT), 603-604 (GT), 605-606 (GT), 607-608 (GT), 609-610 (GT), 611-612 (GT), 613-614 (GT), 615-616 (GT), 617-618 (GT), 619-620 (GT), 621-622 (GT), 623-624 (GT), 625-626 (GT), 627-628 (GT), 629-630 (GT), 631-632 (GN), and 633-634 (GT). Positions 591–638 (GTGTGTGTGTGTGTGTGTGTGTGTGTGTGTGTGTGTGTGTGNGTNSGT) are 24 X 2 AA approximate tandem repeats of G-[TN]. The 23; approximate repeat unit spans residues 635–636 (NS). Positions 635–646 (NSGTTSSSRGGS) are enriched in low complexity. Residues 637–638 (GT) form repeat 24.

Forms a heterodimer with timeless (TIM); the complex then translocates into the nucleus. Post-translationally, phosphorylated with a circadian rhythmicity, probably by the double-time protein (dbt). Phosphorylation could be implicated in the stability of per monomer and in the formation of heterodimer per-tim.

It is found in the nucleus. The protein localises to the cytoplasm. The protein resides in the perinuclear region. Functionally, essential for biological clock functions. Determines the period length of circadian and ultradian rhythms; an increase in PER dosage leads to shortened circadian rhythms and a decrease leads to lengthened circadian rhythms. Essential for the circadian rhythmicity of locomotor activity, eclosion behavior, and for the rhythmic component of the male courtship song that originates in the thoracic nervous system. The biological cycle depends on the rhythmic formation and nuclear localization of the TIM-PER complex. Light induces the degradation of TIM, which promotes elimination of PER. Nuclear activity of the heterodimer coordinatively regulates PER and TIM transcription through a negative feedback loop. Behaves as a negative element in circadian transcriptional loop. Does not appear to bind DNA, suggesting indirect transcriptional inhibition. The protein is Period circadian protein (per) of Drosophila sechellia (Fruit fly).